A 299-amino-acid chain; its full sequence is ATP phosphoribosyltransferase (299 aa).

It belongs to the ATP phosphoribosyltransferase family. Long subfamily. In terms of assembly, equilibrium between an active dimeric form, an inactive hexameric form and higher aggregates. Interconversion between the various forms is largely reversible and is influenced by the natural substrates and inhibitors of the enzyme. Mg(2+) serves as cofactor.

The protein localises to the cytoplasm. It carries out the reaction 1-(5-phospho-beta-D-ribosyl)-ATP + diphosphate = 5-phospho-alpha-D-ribose 1-diphosphate + ATP. The protein operates within amino-acid biosynthesis; L-histidine biosynthesis; L-histidine from 5-phospho-alpha-D-ribose 1-diphosphate: step 1/9. With respect to regulation, feedback inhibited by histidine. In terms of biological role, catalyzes the condensation of ATP and 5-phosphoribose 1-diphosphate to form N'-(5'-phosphoribosyl)-ATP (PR-ATP). Has a crucial role in the pathway because the rate of histidine biosynthesis seems to be controlled primarily by regulation of HisG enzymatic activity. In Serratia proteamaculans (strain 568), this protein is ATP phosphoribosyltransferase.